The following is a 684-amino-acid chain: Divalent metal cation transporter MntH (684 aa).

The disordered stretch occupies residues 223-250; sequence PTAINAPSGTPAAGRTSPTPTTDSQRRS. 11 helical membrane-spanning segments follow: residues 283-303, 318-340, 365-387, 391-413, 427-446, 467-489, 514-534, 555-577, 597-616, 621-643, and 656-678; these read TSLKTSWYLLGPAFVAAIAYV, FGYLLLWVIVAANVMAALVQYLS, LAYWAQAEIVAMATDVAEVIGGA, RIMFNLPLPIGGIITGVVSLLLL, VITALLLVIAIGFTASFFVV, VLLAAAIMGATVMPHAVYLHSGL, VGLAMLIAGGVNAAMLLVAAL, TLGATIAVLFAVGLLASGLASSS, MLVRRLITLGPALAILTLGF, TLVLSQVVLSFGIPFAVLPLVKL, and HRATTWVGWVVAVMVSLLNVMLI.

It in the C-terminal section; belongs to the NRAMP family.

It is found in the cell membrane. In terms of biological role, h(+)-stimulated, divalent metal cation uptake system. The sequence is that of Divalent metal cation transporter MntH (mntH) from Mycobacterium bovis (strain ATCC BAA-935 / AF2122/97).